Consider the following 229-residue polypeptide: Peptidase E (229 aa).

Catalysis depends on charge relay system residues serine 120, aspartate 135, and histidine 157.

It belongs to the peptidase S51 family.

Its subcellular location is the cytoplasm. The enzyme catalyses Dipeptidase E catalyzes the hydrolysis of dipeptides Asp-|-Xaa. It does not act on peptides with N-terminal Glu, Asn or Gln, nor does it cleave isoaspartyl peptides.. Hydrolyzes dipeptides containing N-terminal aspartate residues. May play a role in allowing the cell to use peptide aspartate to spare carbon otherwise required for the synthesis of the aspartate family of amino acids. The protein is Peptidase E of Salmonella paratyphi C (strain RKS4594).